Here is a 333-residue protein sequence, read N- to C-terminus: Ephrin-B2 (333 aa).

The signal sequence occupies residues Met1–Ser27. The region spanning Ile28–Val164 is the Ephrin RBD domain. Residues Ile28–Ala229 lie on the Extracellular side of the membrane. A glycan (N-linked (GlcNAc...) asparagine) is linked at Asn36. 2 disulfides stabilise this stretch: Cys62/Cys101 and Cys89/Cys153. A glycan (N-linked (GlcNAc...) asparagine) is linked at Asn139. The disordered stretch occupies residues Gly165–Ala213. Residues Arg175 to Leu185 are compositionally biased toward basic and acidic residues. Residues Asn190–Ala213 show a composition bias toward polar residues. A helical transmembrane segment spans residues Gly230–Leu250. The Cytoplasmic segment spans residues Lys251–Val333. Ser260 carries the post-translational modification Phosphoserine. Position 274 is a phosphothreonine (Thr274). Arg277 bears the Omega-N-methylarginine mark. A PDZ-binding motif is present at residues Tyr331–Val333.

It belongs to the ephrin family. Interacts with PDZRN3. Binds to the receptor tyrosine kinases EPHA4, EPHB4 and EPHA3. In terms of assembly, (Microbial infection) Interacts with Hendra virus and Nipah virus G protein. In terms of processing, inducible phosphorylation of tyrosine residues in the cytoplasmic domain. In terms of tissue distribution, lung and kidney.

It is found in the cell membrane. The protein localises to the cell junction. It localises to the adherens junction. In terms of biological role, cell surface transmembrane ligand for Eph receptors, a family of receptor tyrosine kinases which are crucial for migration, repulsion and adhesion during neuronal, vascular and epithelial development. Binds promiscuously Eph receptors residing on adjacent cells, leading to contact-dependent bidirectional signaling into neighboring cells. The signaling pathway downstream of the receptor is referred to as forward signaling while the signaling pathway downstream of the ephrin ligand is referred to as reverse signaling. Binds to receptor tyrosine kinase including EPHA4, EPHA3 and EPHB4. Together with EPHB4 plays a central role in heart morphogenesis and angiogenesis through regulation of cell adhesion and cell migration. EPHB4-mediated forward signaling controls cellular repulsion and segregation from EFNB2-expressing cells. May play a role in constraining the orientation of longitudinally projecting axons. (Microbial infection) Acts as a receptor for Hendra virus and Nipah virus. This chain is Ephrin-B2 (EFNB2), found in Homo sapiens (Human).